A 207-amino-acid polypeptide reads, in one-letter code: Imidazoleglycerol-phosphate dehydratase (207 aa).

Belongs to the imidazoleglycerol-phosphate dehydratase family.

It localises to the cytoplasm. It catalyses the reaction D-erythro-1-(imidazol-4-yl)glycerol 3-phosphate = 3-(imidazol-4-yl)-2-oxopropyl phosphate + H2O. It functions in the pathway amino-acid biosynthesis; L-histidine biosynthesis; L-histidine from 5-phospho-alpha-D-ribose 1-diphosphate: step 6/9. This is Imidazoleglycerol-phosphate dehydratase (hisB) from Azospirillum brasilense.